A 211-amino-acid polypeptide reads, in one-letter code: Metalloproteinase inhibitor 3 (211 aa).

Residues 1–23 (MTPWLGLVVLLGSWSLGDWGAEA) form the signal peptide. Cys24 lines the Zn(2+) pocket. 2 involved in metalloproteinase-binding regions span residues 24–27 (CTCS) and 88–89 (ES). Disulfide bonds link Cys24/Cys91, Cys26/Cys118, Cys36/Cys143, Cys145/Cys192, Cys150/Cys155, and Cys163/Cys184. The region spanning 24-143 (CTCSPSHPQD…GLNYRYHLGC (120 aa)) is the NTR domain. Positions 105 to 188 (TGRVYDGKMY…SKHYACIRQK (84 aa)) are mediates interaction with EFEMP1. An N-linked (GlcNAc...) asparagine glycan is attached at Asn207.

It belongs to the protease inhibitor I35 (TIMP) family. Interacts with EFEMP1. Interacts with KDR.

The protein localises to the secreted. The protein resides in the extracellular space. Its subcellular location is the extracellular matrix. Functionally, mediates a variety of processes including matrix regulation and turnover, inflammation, and angiogenesis, through reversible inhibition of zinc protease superfamily enzymes, primarily matrix metalloproteinases (MMPs). Regulates extracellular matrix (ECM) remodeling through inhibition of matrix metalloproteinases (MMP) including MMP-1, MMP-2, MMP-3, MMP-7, MMP-9, MMP-13, MMP-14 and MMP-15. Additionally, modulates the processing of amyloid precursor protein (APP) and apolipoprotein E receptor ApoER2 by inhibiting two alpha-secretases ADAM10 and ADAM17. Functions as a tumor suppressor and a potent inhibitor of angiogenesis. Exerts its anti-angiogenic effect by directly interacting with vascular endothelial growth factor (VEGF) receptor-2/KDR, preventing its binding to the VEGFA ligand. Selectively induces apoptosis in angiogenic endothelial cells through a caspase-independent cell death pathway. Mechanistically, inhibits matrix-induced focal adhesion kinase PTK2 tyrosine phosphorylation and association with paxillin/PXN and disrupts the incorporation of ITGB3, PTK2 and PXN into focal adhesion contacts on the matrix. The chain is Metalloproteinase inhibitor 3 (TIMP3) from Bos taurus (Bovine).